We begin with the raw amino-acid sequence, 113 residues long: MTGTGKTVTRVDLCEAVYQKVGLSRTESSAFVELVLKEITDCLEKGETVKLSSFGSFMVRQKGQRIGRNPKTGTEVPISPRRVMVFKPSAILKQRINGQANGSMSNSDQAETD.

It belongs to the bacterial histone-like protein family. As to quaternary structure, heterodimer of an alpha and a beta chain.

Functionally, this protein is one of the two subunits of integration host factor, a specific DNA-binding protein that functions in genetic recombination as well as in transcriptional and translational control. The chain is Integration host factor subunit alpha from Rhodopseudomonas palustris (strain BisA53).